The chain runs to 378 residues: UPF0725 protein At1g23970 (378 aa).

It belongs to the UPF0725 (EMB2204) family.

The chain is UPF0725 protein At1g23970 from Arabidopsis thaliana (Mouse-ear cress).